Here is a 174-residue protein sequence, read N- to C-terminus: Peptide methionine sulfoxide reductase MsrA (174 aa).

C10 is a catalytic residue.

It belongs to the MsrA Met sulfoxide reductase family.

It carries out the reaction L-methionyl-[protein] + [thioredoxin]-disulfide + H2O = L-methionyl-(S)-S-oxide-[protein] + [thioredoxin]-dithiol. It catalyses the reaction [thioredoxin]-disulfide + L-methionine + H2O = L-methionine (S)-S-oxide + [thioredoxin]-dithiol. In terms of biological role, has an important function as a repair enzyme for proteins that have been inactivated by oxidation. Catalyzes the reversible oxidation-reduction of methionine sulfoxide in proteins to methionine. In Pseudarthrobacter chlorophenolicus (strain ATCC 700700 / DSM 12829 / CIP 107037 / JCM 12360 / KCTC 9906 / NCIMB 13794 / A6) (Arthrobacter chlorophenolicus), this protein is Peptide methionine sulfoxide reductase MsrA.